Reading from the N-terminus, the 286-residue chain is Probable endonuclease 4 (286 aa).

Residues His71, His111, Glu147, Asp181, His184, His218, Asp231, His233, and Glu263 each contribute to the Zn(2+) site.

This sequence belongs to the AP endonuclease 2 family. It depends on Zn(2+) as a cofactor.

It catalyses the reaction Endonucleolytic cleavage to 5'-phosphooligonucleotide end-products.. In terms of biological role, endonuclease IV plays a role in DNA repair. It cleaves phosphodiester bonds at apurinic or apyrimidinic (AP) sites, generating a 3'-hydroxyl group and a 5'-terminal sugar phosphate. This Vibrio cholerae serotype O1 (strain ATCC 39541 / Classical Ogawa 395 / O395) protein is Probable endonuclease 4.